A 409-amino-acid polypeptide reads, in one-letter code: Na(+)-translocating NADH-quinone reductase subunit F (409 aa).

The helical transmembrane segment at 5-25 threads the bilayer; the sequence is FIFGIGAFTAIVLVLAVVILI. The region spanning 34–128 is the 2Fe-2S ferredoxin-type domain; sequence GDITISINND…SMDVELPEEV (95 aa). Positions 71, 77, 80, and 112 each coordinate [2Fe-2S] cluster. Residues 131–271 enclose the FAD-binding FR-type domain; sequence VKKWECTVIS…SGPFGEFFAK (141 aa).

The protein belongs to the NqrF family. Composed of six subunits; NqrA, NqrB, NqrC, NqrD, NqrE and NqrF. The cofactor is [2Fe-2S] cluster. FAD is required as a cofactor.

The protein localises to the cell inner membrane. It catalyses the reaction a ubiquinone + n Na(+)(in) + NADH + H(+) = a ubiquinol + n Na(+)(out) + NAD(+). NQR complex catalyzes the reduction of ubiquinone-1 to ubiquinol by two successive reactions, coupled with the transport of Na(+) ions from the cytoplasm to the periplasm. The first step is catalyzed by NqrF, which accepts electrons from NADH and reduces ubiquinone-1 to ubisemiquinone by a one-electron transfer pathway. The sequence is that of Na(+)-translocating NADH-quinone reductase subunit F from Mannheimia succiniciproducens (strain KCTC 0769BP / MBEL55E).